The sequence spans 135 residues: Photosystem II extrinsic protein U (135 aa).

The signal sequence occupies residues 1 to 29 (MKRLLSWLTGALVMASLMAGLVMPSSVYA).

This sequence belongs to the PsbU family. PSII is composed of 1 copy each of membrane proteins PsbA, PsbB, PsbC, PsbD, PsbE, PsbF, PsbH, PsbI, PsbJ, PsbK, PsbL, PsbM, PsbT, PsbX, PsbY, PsbZ, Psb30/Ycf12, peripheral proteins PsbO, CyanoQ (PsbQ), PsbU, PsbV and a large number of cofactors. It forms dimeric complexes.

It is found in the cellular thylakoid membrane. Its function is as follows. One of the extrinsic, lumenal subunits of photosystem II (PSII). PSII is a light-driven water plastoquinone oxidoreductase, using light energy to abstract electrons from H(2)O, generating a proton gradient subsequently used for ATP formation. The extrinsic proteins stabilize the structure of photosystem II oxygen-evolving complex (OEC), the ion environment of oxygen evolution and protect the OEC against heat-induced inactivation. This chain is Photosystem II extrinsic protein U, found in Synechococcus sp. (strain CC9605).